A 146-amino-acid chain; its full sequence is Cell division protein SepF (146 aa).

Belongs to the SepF family. As to quaternary structure, homodimer. Interacts with FtsZ.

Its subcellular location is the cytoplasm. In terms of biological role, cell division protein that is part of the divisome complex and is recruited early to the Z-ring. Probably stimulates Z-ring formation, perhaps through the cross-linking of FtsZ protofilaments. Its function overlaps with FtsA. This chain is Cell division protein SepF, found in Alkaliphilus oremlandii (strain OhILAs) (Clostridium oremlandii (strain OhILAs)).